The following is a 155-amino-acid chain: Small ribosomal subunit protein uS7cz/uS7cy (155 aa).

This sequence belongs to the universal ribosomal protein uS7 family. Part of the 30S ribosomal subunit.

Its subcellular location is the plastid. It is found in the chloroplast. Functionally, one of the primary rRNA binding proteins, it binds directly to 16S rRNA where it nucleates assembly of the head domain of the 30S subunit. The sequence is that of Small ribosomal subunit protein uS7cz/uS7cy (rps7-A) from Acorus calamus var. americanus (American sweet flag).